A 434-amino-acid polypeptide reads, in one-letter code: 3-phosphoshikimate 1-carboxyvinyltransferase (434 aa).

3-phosphoshikimate is bound by residues K22, S23, and R27. A phosphoenolpyruvate-binding site is contributed by K22. Phosphoenolpyruvate-binding residues include G93 and R121. 3-phosphoshikimate is bound by residues S168, S169, Q170, S199, D320, and K347. Position 170 (Q170) interacts with phosphoenolpyruvate. The active-site Proton acceptor is the D320. Phosphoenolpyruvate is bound by residues R351, R394, and K419.

The protein belongs to the EPSP synthase family. In terms of assembly, monomer.

It is found in the cytoplasm. It catalyses the reaction 3-phosphoshikimate + phosphoenolpyruvate = 5-O-(1-carboxyvinyl)-3-phosphoshikimate + phosphate. It functions in the pathway metabolic intermediate biosynthesis; chorismate biosynthesis; chorismate from D-erythrose 4-phosphate and phosphoenolpyruvate: step 6/7. Catalyzes the transfer of the enolpyruvyl moiety of phosphoenolpyruvate (PEP) to the 5-hydroxyl of shikimate-3-phosphate (S3P) to produce enolpyruvyl shikimate-3-phosphate and inorganic phosphate. The protein is 3-phosphoshikimate 1-carboxyvinyltransferase of Burkholderia multivorans (strain ATCC 17616 / 249).